A 1076-amino-acid chain; its full sequence is Structural maintenance of chromosomes protein 5 (1076 aa).

49 to 56 (GHNGSGKS) contacts ATP. A coiled-coil region spans residues 190-415 (STSIEDKCTT…KRDEEQNSQL (226 aa)). Residues 375–410 (EQKYSTAERDSRQEEDAIQKKSYEMRQLENKKRDEE) show a composition bias toward basic and acidic residues. The tract at residues 375-420 (EQKYSTAERDSRQEEDAIQKKSYEMRQLENKKRDEEQNSQLNRQDR) is disordered. The tract at residues 416–617 (NRQDRYRVLQ…ANTWRDQFFK (202 aa)) is flexible hinge. Coiled coils occupy residues 627-713 (NSIL…EKKA) and 749-786 (KSRV…ALNH).

The protein belongs to the SMC family. SMC5 subfamily. In terms of assembly, interacts with smc-6. In terms of tissue distribution, expressed in the germline (at protein level).

It localises to the nucleus. It is found in the chromosome. Core component of the smc-5/smc-6 complex. Functions in DNA double strand break repair by promoting sister-chromatid homologous recombination during meiosis. Acts in a DNA repair pathway for removal of ionizing radiation- and ultraviolet (UV) radiation-induced DNA lesions that is distinct from classical nucleotide excision repair and the translesion synthesis pathway. Also involved in the recovery of stalled replication forks. The protein is Structural maintenance of chromosomes protein 5 of Caenorhabditis elegans.